We begin with the raw amino-acid sequence, 879 residues long: Alanine--tRNA ligase (879 aa).

Zn(2+) is bound by residues histidine 566, histidine 570, cysteine 668, and histidine 672.

It belongs to the class-II aminoacyl-tRNA synthetase family. Requires Zn(2+) as cofactor.

The protein localises to the cytoplasm. It catalyses the reaction tRNA(Ala) + L-alanine + ATP = L-alanyl-tRNA(Ala) + AMP + diphosphate. Its function is as follows. Catalyzes the attachment of alanine to tRNA(Ala) in a two-step reaction: alanine is first activated by ATP to form Ala-AMP and then transferred to the acceptor end of tRNA(Ala). Also edits incorrectly charged Ser-tRNA(Ala) and Gly-tRNA(Ala) via its editing domain. The protein is Alanine--tRNA ligase of Listeria monocytogenes serovar 1/2a (strain ATCC BAA-679 / EGD-e).